The following is a 230-amino-acid chain: Ribonuclease 3 (230 aa).

In terms of domain architecture, RNase III spans 1–134 (MKQLEELLST…FLGALLLDKG (134 aa)). Mg(2+) is bound at residue E47. D51 is an active-site residue. Residues D120 and E123 each coordinate Mg(2+). The active site involves E123. The DRBM domain maps to 160–229 (DYKTCLQEFL…AKNALAQLSE (70 aa)).

It belongs to the ribonuclease III family. Homodimer. It depends on Mg(2+) as a cofactor.

The protein localises to the cytoplasm. It catalyses the reaction Endonucleolytic cleavage to 5'-phosphomonoester.. Its function is as follows. Digests double-stranded RNA. Involved in the processing of primary rRNA transcript to yield the immediate precursors to the large and small rRNAs (23S and 16S). Processes some mRNAs, and tRNAs when they are encoded in the rRNA operon. Processes pre-crRNA and tracrRNA of type II CRISPR loci if present in the organism. In Streptococcus pyogenes serotype M49 (strain NZ131), this protein is Ribonuclease 3.